A 102-amino-acid chain; its full sequence is Putative pterin-4-alpha-carbinolamine dehydratase (102 aa).

Belongs to the pterin-4-alpha-carbinolamine dehydratase family.

It carries out the reaction (4aS,6R)-4a-hydroxy-L-erythro-5,6,7,8-tetrahydrobiopterin = (6R)-L-erythro-6,7-dihydrobiopterin + H2O. The chain is Putative pterin-4-alpha-carbinolamine dehydratase from Burkholderia lata (strain ATCC 17760 / DSM 23089 / LMG 22485 / NCIMB 9086 / R18194 / 383).